A 208-amino-acid chain; its full sequence is Recombination protein RecR (208 aa).

The segment at Cys-57–Cys-72 adopts a C4-type zinc-finger fold. The 108-residue stretch at Ser-80–Pro-187 folds into the Toprim domain.

This sequence belongs to the RecR family.

Its function is as follows. May play a role in DNA repair. It seems to be involved in an RecBC-independent recombinational process of DNA repair. It may act with RecF and RecO. This is Recombination protein RecR from Polaromonas naphthalenivorans (strain CJ2).